Here is a 156-residue protein sequence, read N- to C-terminus: Small ribosomal subunit protein uS7c (156 aa).

Belongs to the universal ribosomal protein uS7 family. In terms of assembly, part of the 30S ribosomal subunit.

The protein localises to the plastid. It is found in the chloroplast. In terms of biological role, one of the primary rRNA binding proteins, it binds directly to 16S rRNA where it nucleates assembly of the head domain of the 30S subunit. The protein is Small ribosomal subunit protein uS7c (rps7) of Pisum sativum (Garden pea).